We begin with the raw amino-acid sequence, 1010 residues long: BrkA autotransporter (1010 aa).

Positions 1 to 42 are cleaved as a signal peptide; sequence MYLDRFRQCPSSLQIPRSAWRLHALAAALALAGMARLAPAAA. Positions 742–1010 constitute an Autotransporter domain; that stretch reads LRADAGGPWA…SFHAGYRYSF (269 aa).

Its subcellular location is the periplasm. It localises to the secreted. The protein resides in the cell surface. The protein localises to the cell outer membrane. Inhibits the classical pathway of complement activation and prevents accumulation of deposited C4. The protein is BrkA autotransporter of Bordetella pertussis (strain Tohama I / ATCC BAA-589 / NCTC 13251).